The chain runs to 488 residues: 1-hydroxycarotenoid 3,4-desaturase (488 aa).

Residues Glu31, Lys39, Ser55 to Leu56, Val247, Asn275, Leu431, Gly461, and Gly468 to Ile469 contribute to the FAD site.

It belongs to the carotenoid/retinoid oxidoreductase family. As to quaternary structure, monomer.

The catalysed reaction is rhodopin + A = (3E)-3,4-didehydrorhodopin + AH2. It carries out the reaction 1'-hydroxy-gamma-carotene + A = 1'-hydroxytorulene + AH2. The enzyme catalyses 1-hydroxy-all-trans-1,2-dihydro-neurosporene + A = demethylspheroidene + AH2. It catalyses the reaction 1,1'-dihydroxy-1,1',2,2'-tetrahydroneurosporene + A = 1'-hydroxy-demethylspheroidene + AH2. The catalysed reaction is 1,1'-dihydroxy-1,1',2,2'-tetrahydrolycopene + A = 1,1'-dihydroxy-3,4-didehydro-1,2-dihydrolycopene + AH2. The protein operates within carotenoid biosynthesis. Catalyzes the introduction of a C-3,4 double bond into 1'-hydroxy-gamma-carotene and rhodopin (1-hydroxylycopene) to yield 1'-hydroxytorulene and (3E)-3,4-didehydrorhodopin, respectively. Can also 1-hydroxy-all-trans-1,2-dihydro-neurosporene, 1,1'-dihydroxy-1,1',2,2'-tetrahydroneurosporene and 1,1'-dihydroxy-1,1',2,2'-tetrahydrolycopene. Probably involved in the synthesis of myxol, a gamma-carotene derivative. May use FAD as a proton acceptor. The polypeptide is 1-hydroxycarotenoid 3,4-desaturase (Flavobacterium sp. (strain P99-3)).